Consider the following 309-residue polypeptide: D-alanine--D-alanine ligase (309 aa).

The region spanning 106–305 (KMLWKAFGLP…FEQLVVKILE (200 aa)) is the ATP-grasp domain. An ATP-binding site is contributed by 136–191 (VEKLGLPVMVKPSLEGSSVGLTKVKRVEDLKSAVDFALKYDDTVLIEEWLSGAEFT). 3 residues coordinate Mg(2+): aspartate 259, glutamate 272, and asparagine 274.

This sequence belongs to the D-alanine--D-alanine ligase family. It depends on Mg(2+) as a cofactor. Mn(2+) serves as cofactor.

Its subcellular location is the cytoplasm. The catalysed reaction is 2 D-alanine + ATP = D-alanyl-D-alanine + ADP + phosphate + H(+). It participates in cell wall biogenesis; peptidoglycan biosynthesis. Functionally, cell wall formation. This chain is D-alanine--D-alanine ligase, found in Pasteurella multocida (strain Pm70).